A 505-amino-acid chain; its full sequence is MSRSYNDELQFLEKINKNCWRIKKGFVPNMQVEGVFYVNDALEKLMFEELRNACRGGGVGGFLPAMKQIGNVAALPGIVHRSIGLPDVHSGYGFAIGNMAAFDMNDPEAVVSPGGVGFDINCGVRLLRTNLDESDVQPVKEQLAQAMFDHIPVGVGSKGVIPMNAKDLEEALEMGVDWSLREGYAWAEDKEHCEEYGRMLQADPNKVSARAKKRGLPQLGTLGAGNHYAEIQVVDEIFNEYAAKKMGIDHKGQVCVMIHSGSRGLGHQVATDALVAMEKAMKRDKIIVNDRQLACARIASPEGQDYLKGMAAAGNYAWVNRSSMTFLTRQAFAKVFNTTPDDLDLHVIYDVSHNIAKVEQHVVDGKERTLLVHRKGSTRAFPPHHPLIAVDYQLTGQPVLIGGTMGTCSYVLTGTEQGMTETFGTTCHGAGRALSRAKSRRNLDFQDVLDKLADMGIAIRVASPKLVMEEAPESYKNVTDVVNTCHDAGISKKAIKLRPIAVIKG.

The Mn(2+) site is built by Asp119, Cys122, His227, and His259. 226-230 (NHYAE) serves as a coordination point for GMP. The residue at position 300 (Ser300) is a Phosphoserine. Residue His353 participates in Mn(2+) binding. GMP contacts are provided by residues 353-354 (HN), 402-405 (GGTM), Ser409, and 428-431 (HGAG). His428 (GMP-histidine intermediate) is an active-site residue. Lys496 participates in a covalent cross-link: Glycyl lysine isopeptide (Lys-Gly) (interchain with G-Cter in SUMO2). Lys504 contacts GMP.

Belongs to the RtcB family. Catalytic component of the tRNA-splicing ligase complex. The cofactor is Mn(2+).

It is found in the nucleus. The protein localises to the cytoplasm. The catalysed reaction is a 3'-end 3'-phospho-ribonucleotide-RNA + a 5'-end dephospho-ribonucleoside-RNA + GTP = a ribonucleotidyl-ribonucleotide-RNA + GMP + diphosphate. It carries out the reaction a 3'-end 2',3'-cyclophospho-ribonucleotide-RNA + a 5'-end dephospho-ribonucleoside-RNA + GTP + H2O = a ribonucleotidyl-ribonucleotide-RNA + GMP + diphosphate + H(+). Its activity is regulated as follows. Protein archease stimulates the activity of the tRNA ligase complex with high efficiency in the presence of GTP. Functionally, catalytic subunit of the tRNA-splicing ligase complex that acts by directly joining spliced tRNA halves to mature-sized tRNAs by incorporating the precursor-derived splice junction phosphate into the mature tRNA as a canonical 3',5'-phosphodiester. May act as an RNA ligase with broad substrate specificity, and may function toward other RNAs. The protein is RNA-splicing ligase RtcB homolog of Homo sapiens (Human).